Consider the following 154-residue polypeptide: 6,7-dimethyl-8-ribityllumazine synthase (154 aa).

Residues phenylalanine 22, alanine 56–glutamate 58, and alanine 80–isoleucine 82 contribute to the 5-amino-6-(D-ribitylamino)uracil site. Alanine 85 to threonine 86 provides a ligand contact to (2S)-2-hydroxy-3-oxobutyl phosphate. Residue histidine 88 is the Proton donor of the active site. Phenylalanine 113 serves as a coordination point for 5-amino-6-(D-ribitylamino)uracil. Arginine 127 contacts (2S)-2-hydroxy-3-oxobutyl phosphate.

This sequence belongs to the DMRL synthase family.

It catalyses the reaction (2S)-2-hydroxy-3-oxobutyl phosphate + 5-amino-6-(D-ribitylamino)uracil = 6,7-dimethyl-8-(1-D-ribityl)lumazine + phosphate + 2 H2O + H(+). The protein operates within cofactor biosynthesis; riboflavin biosynthesis; riboflavin from 2-hydroxy-3-oxobutyl phosphate and 5-amino-6-(D-ribitylamino)uracil: step 1/2. Functionally, catalyzes the formation of 6,7-dimethyl-8-ribityllumazine by condensation of 5-amino-6-(D-ribitylamino)uracil with 3,4-dihydroxy-2-butanone 4-phosphate. This is the penultimate step in the biosynthesis of riboflavin. The sequence is that of 6,7-dimethyl-8-ribityllumazine synthase from Syntrophobacter fumaroxidans (strain DSM 10017 / MPOB).